A 114-amino-acid polypeptide reads, in one-letter code: FK506-binding protein 1 (114 aa).

Positions glycine 26–asparagine 114 constitute a PPIase FKBP-type domain.

Belongs to the FKBP-type PPIase family. FKBP1 subfamily.

The protein resides in the cytoplasm. The catalysed reaction is [protein]-peptidylproline (omega=180) = [protein]-peptidylproline (omega=0). Inhibited by both FK506 and rapamycin. In terms of biological role, PPIases accelerate the folding of proteins. It catalyzes the cis-trans isomerization of proline imidic peptide bonds in oligopeptides. The polypeptide is FK506-binding protein 1 (FPR1) (Kluyveromyces lactis (strain ATCC 8585 / CBS 2359 / DSM 70799 / NBRC 1267 / NRRL Y-1140 / WM37) (Yeast)).